The primary structure comprises 210 residues: Isomeliandiol synthase ISM1 (210 aa).

A run of 5 helical transmembrane segments spans residues 17–37 (FTLH…TWFI), 50–70 (LLCW…YFVF), 107–127 (IEGM…YAIV), 135–155 (ILQF…FLTA), and 172–192 (YYVG…INFW). An EXPERA domain is found at 46 to 188 (GDRLLLCWWA…IWIIVPSLIA (143 aa)).

It belongs to the EBP family.

The protein localises to the membrane. It catalyses the reaction 7,8-epoxymelianol = isomeliandiol. Its pathway is secondary metabolite biosynthesis; terpenoid biosynthesis. In terms of biological role, isomerase involved in the biosynthesis of limonoids and quassinoids triterpene natural products such as ailanthone, chaparrinone, glaucarubinone and amarolide, allelopathic degraded triterpene lactones inhibiting the growth of other plants, and possessing antimalarial, antifeedant, insecticidal, anti-inflammatory and anticancer activities. Catalyzes the conversion of 7,8-epoxymelianol to isomeliandiol via skeletal rearrangements. This chain is Isomeliandiol synthase ISM1, found in Ailanthus altissima (Tree-of-heaven).